The chain runs to 154 residues: Ascorbate-specific PTS system EIIA component (154 aa).

In terms of domain architecture, PTS EIIA type-2 spans 6–150 (SLAENNSIRL…QEVLDLIDRT (145 aa)). The active-site Tele-phosphohistidine intermediate is histidine 68. Histidine 68 carries the phosphohistidine modification.

It is found in the cytoplasm. Its function is as follows. The phosphoenolpyruvate-dependent sugar phosphotransferase system (sugar PTS), a major carbohydrate active transport system, catalyzes the phosphorylation of incoming sugar substrates concomitantly with their translocation across the cell membrane. The enzyme II UlaABC PTS system is involved in ascorbate transport. This chain is Ascorbate-specific PTS system EIIA component (ulaC), found in Salmonella paratyphi A (strain ATCC 9150 / SARB42).